Consider the following 220-residue polypeptide: Deoxyribose-phosphate aldolase (220 aa).

Residue Asp-89 is the Proton donor/acceptor of the active site. The active-site Schiff-base intermediate with acetaldehyde is Lys-151. Lys-180 serves as the catalytic Proton donor/acceptor.

This sequence belongs to the DeoC/FbaB aldolase family. DeoC type 1 subfamily.

It localises to the cytoplasm. It carries out the reaction 2-deoxy-D-ribose 5-phosphate = D-glyceraldehyde 3-phosphate + acetaldehyde. The protein operates within carbohydrate degradation; 2-deoxy-D-ribose 1-phosphate degradation; D-glyceraldehyde 3-phosphate and acetaldehyde from 2-deoxy-alpha-D-ribose 1-phosphate: step 2/2. Functionally, catalyzes a reversible aldol reaction between acetaldehyde and D-glyceraldehyde 3-phosphate to generate 2-deoxy-D-ribose 5-phosphate. The sequence is that of Deoxyribose-phosphate aldolase from Bdellovibrio bacteriovorus (strain ATCC 15356 / DSM 50701 / NCIMB 9529 / HD100).